Consider the following 1361-residue polypeptide: Pre-mRNA-splicing factor RSE1 (1361 aa).

Disordered regions lie at residues 788–811 (NNEEEEEEEEDDDDEKEEEEINSS) and 893–912 (VNKQENGGGDESNEEEEDEM). Acidic residues-rich tracts occupy residues 789 to 808 (NEEEEEEEEDDDDEKEEEEI) and 903 to 912 (ESNEEEEDEM).

This sequence belongs to the RSE1 family. As to quaternary structure, belongs to the SF3B complex, a U2 associated sub-complex of the spliceosome. The SF3B complex is composed of at least CUS1, HSH49, HSH155, RDS3 and RSE1. Also belongs to the CWC complex (or CEF1-associated complex), a spliceosome sub-complex reminiscent of a late-stage spliceosome composed of the U2, U5 and U6 snRNAs and at least BUD13, BUD31, BRR2, CDC40, CEF1, CLF1, CUS1, CWC2, CWC15, CWC21, CWC22, CWC23, CWC24, CWC25, CWC27, ECM2, HSH155, IST3, ISY1, LEA1, MSL1, NTC20, PRP8, PRP9, PRP11, PRP19, PRP21, PRP22, PRP45, PRP46, SLU7, SMB1, SMD1, SMD2, SMD3, SMX2, SMX3, SNT309, SNU114, SPP2, SYF1, SYF2, RSE1 and YJU2. Interacts with RDS3.

Its subcellular location is the nucleus. In terms of biological role, involved in G2/M transition. Required for pre-mRNA splicing and endoplasmic reticulum (ER) to Golgi secretion pathway. U2 snRNPs associated protein required for the pre-spliceosome assembly. The involvement in ER to Golgi secretion is probably indirect and due to the splicing of the pre-mRNA coding for SAR1, a small GTP-binding protein required for COPII vesicle formation from the ER. In Saccharomyces cerevisiae (strain ATCC 204508 / S288c) (Baker's yeast), this protein is Pre-mRNA-splicing factor RSE1 (RSE1).